The following is a 155-amino-acid chain: Probable adenylyl-sulfate kinase (155 aa).

An ATP-binding site is contributed by 9 to 16 (GPSGAGKT). S83 acts as the Phosphoserine intermediate in catalysis. Residues 134–155 (LDGEYEEPENPEVVVDTDKNDR) are disordered.

Belongs to the APS kinase family.

It carries out the reaction adenosine 5'-phosphosulfate + ATP = 3'-phosphoadenylyl sulfate + ADP + H(+). Its pathway is sulfur metabolism; hydrogen sulfide biosynthesis; sulfite from sulfate: step 2/3. Catalyzes the synthesis of activated sulfate. The sequence is that of Probable adenylyl-sulfate kinase (cysC) from Archaeoglobus fulgidus (strain ATCC 49558 / DSM 4304 / JCM 9628 / NBRC 100126 / VC-16).